Here is a 259-residue protein sequence, read N- to C-terminus: MKWTISCLQFDISYGKPSENIKKAEFFIEKESKHADVLVLPELWTTGYDLANLDELADEDGRSAQSWLKKTAKKHGVHIVAGSVAVRKNSDVYNTMYIADKEGQIIKEYRKAHLFQLMDEHLYLSAGSEDGYFELDGVKSSGLICYDIRFPEWIRKHTTKGANVLFISAEWPLPRLDHWKSLLIARAIENQCFVAACNCTGSNPDNEFAGHSLIIDPWGRVLAEGGREEGIVRAEIDLQESAEVRESIPVFDDIRKDLY.

The region spanning 3–238 is the CN hydrolase domain; it reads WTISCLQFDI…EGIVRAEIDL (236 aa). The Proton acceptor role is filled by glutamate 42. Lysine 111 serves as the catalytic Proton donor. Residue cysteine 145 is the Nucleophile of the active site.

Belongs to the carbon-nitrogen hydrolase superfamily. NIT1/NIT2 family.

The catalysed reaction is 2-oxoglutaramate + H2O = 2-oxoglutarate + NH4(+). Involved in the methylthioribose (MTR) recycling pathway. Probably catalyzes the conversion of 2-oxoglutaramate to 2-oxoglutarate. This Bacillus subtilis (strain 168) protein is 2-oxoglutaramate amidase.